The sequence spans 124 residues: Small ribosomal subunit protein uS12 (124 aa).

A disordered region spans residues 1-25; that stretch reads MPTFNQLVRNGRKPPRWKTSSPALE. A 3-methylthioaspartic acid modification is found at aspartate 89. Positions 104 to 124 are disordered; it reads TAGVANRKQSRSKYGAKRPKS. The span at 111-124 shows a compositional bias: basic residues; it reads KQSRSKYGAKRPKS.

The protein belongs to the universal ribosomal protein uS12 family. As to quaternary structure, part of the 30S ribosomal subunit. Contacts proteins S8 and S17. May interact with IF1 in the 30S initiation complex.

Functionally, with S4 and S5 plays an important role in translational accuracy. Its function is as follows. Interacts with and stabilizes bases of the 16S rRNA that are involved in tRNA selection in the A site and with the mRNA backbone. Located at the interface of the 30S and 50S subunits, it traverses the body of the 30S subunit contacting proteins on the other side and probably holding the rRNA structure together. The combined cluster of proteins S8, S12 and S17 appears to hold together the shoulder and platform of the 30S subunit. The chain is Small ribosomal subunit protein uS12 from Solibacter usitatus (strain Ellin6076).